Reading from the N-terminus, the 116-residue chain is Toxin ICK-10 (116 aa).

The signal sequence occupies residues 1–19; the sequence is MMKLYSLVIIATLAAAAFA. 4 disulfide bridges follow: cysteine 56–cysteine 71, cysteine 64–cysteine 77, cysteine 68–cysteine 113, and cysteine 70–cysteine 84.

It belongs to the neurotoxin 25 family. ICK-8 subfamily. Expressed by the venom gland.

It localises to the secreted. Its function is as follows. Ion channel inhibitor. The polypeptide is Toxin ICK-10 (Trittame loki (Brush-footed trapdoor spider)).